The chain runs to 404 residues: uncharacterized protein (404 aa).

11 helical membrane passes run 15 to 35 (WSLLMGAAFLMATSAIGPGFL), 43 to 63 (NTLAASFGFVILISIILDIFA), 84 to 104 (MVLPGLGYFIAILVVLGGLAF), 121 to 141 (GITPETGALISAVIAILIFVI), 154 to 174 (IAGFVMIILTVYVAATTAPPV), 187 to 207 (ISIFAIVTLVGGTVGGYITFA), 231 to 251 (VVGILITSVMRIALFLAVLGV), 279 to 299 (IFGLIMWSAAITSVIGAAYTS), 316 to 336 (GIIIGFIVVSTLAFVTIGQPA), 338 to 358 (ILVLVGSLNGLILPIALGTLL), and 373 to 393 (PLWLTSTGALVVIVMAVMGIY).

It belongs to the NRAMP family.

The protein resides in the cell membrane. This is an uncharacterized protein from Bacillus subtilis (strain 168).